A 181-amino-acid chain; its full sequence is Small ribosomal subunit protein uS4 (181 aa).

The region spanning 106-168 is the S4 RNA-binding domain; the sequence is RRLQTLVYRK…PTSRIVKAKV (63 aa).

It belongs to the universal ribosomal protein uS4 family. In terms of assembly, part of the 30S ribosomal subunit. Contacts protein S5. The interaction surface between S4 and S5 is involved in control of translational fidelity.

In terms of biological role, one of the primary rRNA binding proteins, it binds directly to 16S rRNA where it nucleates assembly of the body of the 30S subunit. With S5 and S12 plays an important role in translational accuracy. The sequence is that of Small ribosomal subunit protein uS4 from Caldivirga maquilingensis (strain ATCC 700844 / DSM 13496 / JCM 10307 / IC-167).